A 633-amino-acid chain; its full sequence is Extracellular metalloproteinase mep (633 aa).

Positions 1–18 are cleaved as a signal peptide; that stretch reads MRLLSLAGAMALPLCVLA. Positions 19 to 244 are excised as a propeptide; sequence HPTHRTRGIA…IHGVVDYISD (226 aa). N326 carries an N-linked (GlcNAc...) asparagine glycan. H428 contributes to the Zn(2+) binding site. E429 is an active-site residue. H432 lines the Zn(2+) pocket. A glycan (N-linked (GlcNAc...) asparagine) is linked at N514.

Belongs to the peptidase M36 family. It depends on Zn(2+) as a cofactor.

It localises to the secreted. Its function is as follows. Secreted metalloproteinase that allows assimilation of proteinaceous substrates. This Aspergillus terreus (strain NIH 2624 / FGSC A1156) protein is Extracellular metalloproteinase mep (mep).